A 533-amino-acid chain; its full sequence is Yeast-form wall Protein 1 (533 aa).

The signal sequence occupies residues 1 to 21; that stretch reads MKVSTIFAAASALFAATTTLA. N-linked (GlcNAc...) asparagine glycosylation occurs at asparagine 115. Disordered regions lie at residues 161 to 219 and 418 to 451; these read YVPG…GEST and PTKG…AHAS. Composition is skewed to low complexity over residues 163–214 and 427–451; these read PGSS…ATGA and PGSP…AHAS. Glycine 511 carries the GPI-anchor amidated glycine lipid modification. Positions 512-533 are cleaved as a propeptide — removed in mature form; sequence AAAASAGASVLALALIPLAYFI.

It belongs to the flocculin family. In terms of processing, the GPI-anchor is attached to the protein in the endoplasmic reticulum and serves to target the protein to the cell surface. There, the glucosamine-inositol phospholipid moiety is cleaved off and the GPI-modified mannoprotein is covalently attached via its lipidless GPI glycan remnant to the 1,6-beta-glucan of the outer cell wall layer. Cleaved by SAP9 and SAP10, which leads to its release from the cell wall. Post-translationally, N-glycosylated.

The protein resides in the secreted. It localises to the cell wall. Its subcellular location is the membrane. Cell wall protein which plays an anti-adhesive role and promotes dispersal of yeast forms, which allows the organism to seek new sites for colonization. The chain is Yeast-form wall Protein 1 (YWP1) from Candida albicans (strain SC5314 / ATCC MYA-2876) (Yeast).